The following is a 165-amino-acid chain: Small ribosomal subunit protein eS10 (165 aa).

Positions 92–165 (ATLRRSRPET…FGRGRGQAPQ (74 aa)) are disordered. The span at 97 to 128 (SRPETGRPRPKGLEGERPPRLPRGETDRDTYR) shows a compositional bias: basic and acidic residues. The span at 142–153 (AGAGAATEFQFR) shows a compositional bias: low complexity. The span at 154 to 165 (GGFGRGRGQAPQ) shows a compositional bias: gly residues.

This sequence belongs to the eukaryotic ribosomal protein eS10 family. Component of the small ribosomal subunit.

The protein resides in the cytoplasm. Its subcellular location is the nucleus. It is found in the nucleolus. Its function is as follows. Component of the 40S ribosomal subunit. The ribosome is a large ribonucleoprotein complex responsible for the synthesis of proteins in the cell. The sequence is that of Small ribosomal subunit protein eS10 (rps10) from Xenopus laevis (African clawed frog).